The primary structure comprises 313 residues: Ribosomal RNA small subunit methyltransferase H (313 aa).

S-adenosyl-L-methionine contacts are provided by residues Gly-35 to His-37, Asp-55, Phe-81, Asp-103, and Gln-110.

The protein belongs to the methyltransferase superfamily. RsmH family.

The protein localises to the cytoplasm. It carries out the reaction cytidine(1402) in 16S rRNA + S-adenosyl-L-methionine = N(4)-methylcytidine(1402) in 16S rRNA + S-adenosyl-L-homocysteine + H(+). Its function is as follows. Specifically methylates the N4 position of cytidine in position 1402 (C1402) of 16S rRNA. This Pseudomonas aeruginosa (strain UCBPP-PA14) protein is Ribosomal RNA small subunit methyltransferase H.